The sequence spans 149 residues: Arginine regulator (149 aa).

The protein belongs to the ArgR family.

The protein resides in the cytoplasm. It participates in amino-acid degradation; L-arginine degradation via ADI pathway. Regulates the transcription of the arc operon, involved in arginine catabolism. In Bacillus cereus (strain ATCC 14579 / DSM 31 / CCUG 7414 / JCM 2152 / NBRC 15305 / NCIMB 9373 / NCTC 2599 / NRRL B-3711), this protein is Arginine regulator (argR1).